We begin with the raw amino-acid sequence, 81 residues long: Fungal defensin micasin (81 aa).

A signal peptide spans 1–21; sequence MQFTKLATILLVSLMGSAAIA. The propeptide occupies 22–43; it reads APATNNAAVDAAADATPAVEKR. Cystine bridges form between Cys-47/Cys-68, Cys-54/Cys-76, and Cys-58/Cys-78.

This sequence belongs to the invertebrate defensin family.

Its subcellular location is the secreted. Its function is as follows. Antibacterial peptide with potent activity against both Gram-positive and Gram-negative bacteria. May kill bacteria via an intracellular action mode to affect protein folding. Does not show effects on tested filamentous fungi or on the yeast S.cerevisiae. Does not act by destroying the membrane integrity, which is consistent with its nonamphiphilic architecture. Acts more rapidly than vancomycin, suggesting it does not act by inhibiting cell-wall biosynthesis. Does not cause hemolysis and has no cytotoxic effect on HEK cells. In vivo, is as efficient as vancomycin to protect mouse peritonitis models from S.aureus and P.aeruginosa infections. This is Fungal defensin micasin from Arthroderma otae (Microsporum canis).